A 715-amino-acid polypeptide reads, in one-letter code: Polyribonucleotide nucleotidyltransferase (715 aa).

2 residues coordinate Mg(2+): Asp498 and Asp504. The region spanning 565–625 (PKVCMMQIKP…ETVKKTVAFI (61 aa)) is the KH domain. Residues 635-709 (GTCYQASILR…RIDFLLLPKK (75 aa)) form the S1 motif domain.

The protein belongs to the polyribonucleotide nucleotidyltransferase family. It depends on Mg(2+) as a cofactor.

The protein resides in the cytoplasm. The enzyme catalyses RNA(n+1) + phosphate = RNA(n) + a ribonucleoside 5'-diphosphate. Functionally, involved in mRNA degradation. Catalyzes the phosphorolysis of single-stranded polyribonucleotides processively in the 3'- to 5'-direction. This chain is Polyribonucleotide nucleotidyltransferase, found in Aster yellows witches'-broom phytoplasma (strain AYWB).